A 548-amino-acid chain; its full sequence is Aromatic ammonia-lyase (548 aa).

Tyr55 (proton donor/acceptor) is an active-site residue. A cross-link (5-imidazolinone (Ala-Gly)) is located at residues 144–146; it reads ASG. Residue Ser145 is modified to 2,3-didehydroalanine (Ser). (E)-cinnamate is bound by residues Asn200, Gln288, Arg294, Asn324, Lys396, Glu425, and Asn428.

The protein belongs to the PAL/histidase family. As to quaternary structure, homotetramer. Contains an active site 4-methylidene-imidazol-5-one (MIO), which is formed autocatalytically by cyclization and dehydration of residues Ala-Ser-Gly.

The enzyme catalyses L-phenylalanine = (E)-cinnamate + NH4(+). The catalysed reaction is L-tyrosine = (E)-4-coumarate + NH4(+). It catalyses the reaction 3,4-dimethoxy-L-phenylalanine = 3,4-dimethoxy-(E)-cinnamate + NH4(+). Its pathway is phenylpropanoid metabolism; trans-cinnamate biosynthesis; trans-cinnamate from L-phenylalanine: step 1/1. Functionally, aromatic ammonia-lyase (AAL) that shows reduced activity to catalyze the non-oxidative ammonia elimination from the canonical AAL substrates L-Phe and L-Tyr, contrasted by its pronounced efficiency towards substrates with electron-donor aromatic substituents such as 3,4-dimethoxy-L-phenylalanine. Is also able to catalyze the reverse reaction in vitro, i.e. the ammonia addition reaction to cinnamate derivatives, producing enantiopure phenylalanine derivatives. Shows no activity with L-His. The sequence is that of Aromatic ammonia-lyase from Loktanella atrilutea.